A 242-amino-acid polypeptide reads, in one-letter code: 1-(5-phosphoribosyl)-5-[(5-phosphoribosylamino)methylideneamino] imidazole-4-carboxamide isomerase (242 aa).

Aspartate 7 serves as the catalytic Proton acceptor. Aspartate 129 serves as the catalytic Proton donor.

This sequence belongs to the HisA/HisF family.

Its subcellular location is the cytoplasm. It catalyses the reaction 1-(5-phospho-beta-D-ribosyl)-5-[(5-phospho-beta-D-ribosylamino)methylideneamino]imidazole-4-carboxamide = 5-[(5-phospho-1-deoxy-D-ribulos-1-ylimino)methylamino]-1-(5-phospho-beta-D-ribosyl)imidazole-4-carboxamide. It participates in amino-acid biosynthesis; L-histidine biosynthesis; L-histidine from 5-phospho-alpha-D-ribose 1-diphosphate: step 4/9. The sequence is that of 1-(5-phosphoribosyl)-5-[(5-phosphoribosylamino)methylideneamino] imidazole-4-carboxamide isomerase from Pseudoalteromonas translucida (strain TAC 125).